Here is a 359-residue protein sequence, read N- to C-terminus: Peptide chain release factor 1 (359 aa).

At Q235 the chain carries N5-methylglutamine. The disordered stretch occupies residues 282–306 (RQRADSERSADRKSQVGSGDRSERI).

This sequence belongs to the prokaryotic/mitochondrial release factor family. Methylated by PrmC. Methylation increases the termination efficiency of RF1.

The protein localises to the cytoplasm. Functionally, peptide chain release factor 1 directs the termination of translation in response to the peptide chain termination codons UAG and UAA. This Rhizobium rhizogenes (strain K84 / ATCC BAA-868) (Agrobacterium radiobacter) protein is Peptide chain release factor 1.